Consider the following 860-residue polypeptide: Probable beta-glucosidase A (860 aa).

Residues 1 to 19 (MRFTSIEAVALTAVSLASA) form the signal peptide. N61, N211, and N252 each carry an N-linked (GlcNAc...) asparagine glycan. D280 is a catalytic residue. N-linked (GlcNAc...) asparagine glycans are attached at residues N315, N322, N354, N387, N442, N523, N542, N564, N658, N690, and N712.

The protein belongs to the glycosyl hydrolase 3 family.

It is found in the secreted. The enzyme catalyses Hydrolysis of terminal, non-reducing beta-D-glucosyl residues with release of beta-D-glucose.. It participates in glycan metabolism; cellulose degradation. Its function is as follows. Beta-glucosidases are one of a number of cellulolytic enzymes involved in the degradation of cellulosic biomass. Catalyzes the last step releasing glucose from the inhibitory cellobiose. The sequence is that of Probable beta-glucosidase A (bglA) from Aspergillus niger (strain ATCC MYA-4892 / CBS 513.88 / FGSC A1513).